Here is a 73-residue protein sequence, read N- to C-terminus: Protein BP4C (73 aa).

In terms of tissue distribution, pollen specific.

The protein is Protein BP4C (BP4C) of Brassica napus (Rape).